A 107-amino-acid polypeptide reads, in one-letter code: Prokineticin-2 (107 aa).

The N-terminal stretch at 1–26 (MEDPRCAPLLLLLLLPLLLTPPAGDA) is a signal peptide. 5 disulfides stabilise this stretch: cysteine 33–cysteine 45, cysteine 39–cysteine 57, cysteine 44–cysteine 85, cysteine 67–cysteine 93, and cysteine 87–cysteine 103.

The protein belongs to the AVIT (prokineticin) family. As to expression, expressed at high levels in testis and at lower levels in brain, lung, ovary, spleen, thymus and uterus.

The protein resides in the secreted. May function as an output molecule from the suprachiasmatic nucleus (SCN) that transmits behavioral circadian rhythm. May also function locally within the SCN to synchronize output. Potently contracts gastrointestinal (GI) smooth muscle. The chain is Prokineticin-2 (Prok2) from Rattus norvegicus (Rat).